The following is a 304-amino-acid chain: MLRAKMLGRGPYKPLAILRHMGPLCATRPQHWRFQHSYAEKHSNCARHPLWTGPVSSPGGTQQSPINIQWTDSVYDPKLAPLRVSYDAASCRYLWNTGYFFQVEFDDSCEESGISGGPLGNHYRLKQFHFHWGATDEWGSEHMVDGHAYPAELHLVHWNSMKYENYKKATTGENGLAVIGVFLKLGAHHEALQRLVDILPEVRHKDTQVTMGPFDPSCLLPACRDYWTYPGSLTTPPLAESVTWIVHKMPIEVSPSQLSTFRTLLFSGRGEDEEVMVNNFRPLQPLRGRNVRSSFQVPRVGTKS.

A mitochondrion-targeting transit peptide spans 1–34; sequence MLRAKMLGRGPYKPLAILRHMGPLCATRPQHWRF. The 261-residue stretch at 35-295 folds into the Alpha-carbonic anhydrase domain; sequence QHSYAEKHSN…LRGRNVRSSF (261 aa). His-129, His-131, and His-154 together coordinate Zn(2+).

Belongs to the alpha-carbonic anhydrase family. The cofactor is Zn(2+). High in liver, also detected in heart, lung, kidney, spleen and intestine.

The protein resides in the mitochondrion. The enzyme catalyses hydrogencarbonate + H(+) = CO2 + H2O. Its function is as follows. Mitochondrial carbonic anhydrase that catalyzes the reversible conversion of carbon dioxide to bicarbonate/HCO3. Mitochondria are impermeable to HCO3, and thus this intramitochondrial carbonic anhydrase is pivotal in providing HCO3 for multiple mitochondrial enzymes that catalyze the formation of essential metabolites of intermediary metabolism in the urea and Krebs cycles. The chain is Carbonic anhydrase 5A, mitochondrial from Rattus norvegicus (Rat).